The sequence spans 154 residues: Large ribosomal subunit protein uL13 (154 aa).

This sequence belongs to the universal ribosomal protein uL13 family. As to quaternary structure, part of the 50S ribosomal subunit.

Its function is as follows. This protein is one of the early assembly proteins of the 50S ribosomal subunit, although it is not seen to bind rRNA by itself. It is important during the early stages of 50S assembly. This chain is Large ribosomal subunit protein uL13, found in Cereibacter sphaeroides (strain ATCC 17029 / ATH 2.4.9) (Rhodobacter sphaeroides).